Here is a 406-residue protein sequence, read N- to C-terminus: Testis-specific Y-encoded-like protein 4 (406 aa).

4 disordered regions span residues 1–63 (MNGV…EHCG), 81–121 (GLED…AKPK), 161–189 (EAGA…TRPR), and 387–406 (VRVP…FQSG). Over residues 8–20 (NELSLANTTTPSH) the composition is skewed to polar residues. Residues 93–102 (DAPSAPVAAD) show a composition bias toward low complexity. A compositionally biased stretch (basic and acidic residues) spans 167–188 (QEKKGLQKEKKVAGGGKEETRP).

The protein belongs to the nucleosome assembly protein (NAP) family.

The polypeptide is Testis-specific Y-encoded-like protein 4 (Tspyl4) (Mus musculus (Mouse)).